We begin with the raw amino-acid sequence, 141 residues long: Holo-[acyl-carrier-protein] synthase (141 aa).

The Mg(2+) site is built by aspartate 7 and glutamate 57.

This sequence belongs to the P-Pant transferase superfamily. AcpS family. Mg(2+) is required as a cofactor.

It is found in the cytoplasm. It carries out the reaction apo-[ACP] + CoA = holo-[ACP] + adenosine 3',5'-bisphosphate + H(+). Functionally, transfers the 4'-phosphopantetheine moiety from coenzyme A to a Ser of acyl-carrier-protein. The sequence is that of Holo-[acyl-carrier-protein] synthase from Corynebacterium efficiens (strain DSM 44549 / YS-314 / AJ 12310 / JCM 11189 / NBRC 100395).